Consider the following 359-residue polypeptide: Peptide chain release factor 1 (359 aa).

An N5-methylglutamine modification is found at Gln235.

Belongs to the prokaryotic/mitochondrial release factor family. In terms of processing, methylated by PrmC. Methylation increases the termination efficiency of RF1.

The protein localises to the cytoplasm. Its function is as follows. Peptide chain release factor 1 directs the termination of translation in response to the peptide chain termination codons UAG and UAA. In Anaplasma marginale (strain Florida), this protein is Peptide chain release factor 1.